Reading from the N-terminus, the 207-residue chain is ATP-dependent Clp protease proteolytic subunit (207 aa).

Ser111 (nucleophile) is an active-site residue. His136 is a catalytic residue.

This sequence belongs to the peptidase S14 family. Fourteen ClpP subunits assemble into 2 heptameric rings which stack back to back to give a disk-like structure with a central cavity, resembling the structure of eukaryotic proteasomes.

The protein resides in the cytoplasm. The catalysed reaction is Hydrolysis of proteins to small peptides in the presence of ATP and magnesium. alpha-casein is the usual test substrate. In the absence of ATP, only oligopeptides shorter than five residues are hydrolyzed (such as succinyl-Leu-Tyr-|-NHMec, and Leu-Tyr-Leu-|-Tyr-Trp, in which cleavage of the -Tyr-|-Leu- and -Tyr-|-Trp bonds also occurs).. Its function is as follows. Cleaves peptides in various proteins in a process that requires ATP hydrolysis. Has a chymotrypsin-like activity. Plays a major role in the degradation of misfolded proteins. This chain is ATP-dependent Clp protease proteolytic subunit, found in Proteus mirabilis (strain HI4320).